A 300-amino-acid polypeptide reads, in one-letter code: MSARIIDGKAAAARVLEQVSTEVKILKADGIEPALAVILVGNDPASEVYVRNKILRAEEAGIRSLEHRLPAKSSQAQVLALIAELNADDSVNGILLQLPLPSHMEEARALQAIDPGKDVDGFHSENVGGLSQGRSVLTPCTPSGCMHLLEETCGDLSGKHAVVIGRSNIVGKPMAALLLQAHCSVTVVHSRSTDAKALCQLADIVVAAVGRPRMIDASWLKPGAVVIDVGINRIEDQGRSRLVGDIDFDNALSVASAITPVPGGVGPMTIAFLMKNTVTAARQQALAQRSQSEAVCLSTC.

NADP(+)-binding positions include 165-167 (GRS), serine 190, and isoleucine 231.

This sequence belongs to the tetrahydrofolate dehydrogenase/cyclohydrolase family. Homodimer.

The catalysed reaction is (6R)-5,10-methylene-5,6,7,8-tetrahydrofolate + NADP(+) = (6R)-5,10-methenyltetrahydrofolate + NADPH. It carries out the reaction (6R)-5,10-methenyltetrahydrofolate + H2O = (6R)-10-formyltetrahydrofolate + H(+). It functions in the pathway one-carbon metabolism; tetrahydrofolate interconversion. Functionally, catalyzes the oxidation of 5,10-methylenetetrahydrofolate to 5,10-methenyltetrahydrofolate and then the hydrolysis of 5,10-methenyltetrahydrofolate to 10-formyltetrahydrofolate. The chain is Bifunctional protein FolD 2 from Pseudomonas savastanoi pv. phaseolicola (strain 1448A / Race 6) (Pseudomonas syringae pv. phaseolicola (strain 1448A / Race 6)).